A 687-amino-acid polypeptide reads, in one-letter code: Auxin response factor 14 (687 aa).

The TF-B3 DNA-binding region spans 133–235 (FCKTLTASDT…QLRLGVRRAV (103 aa)).

It belongs to the ARF family. Homo and heterodimers. Expressed in roots, culms, leaves and young panicles.

It localises to the nucleus. Auxin response factors (ARFs) are transcriptional factors that bind specifically to the DNA sequence 5'-TGTCTC-3' found in the auxin-responsive promoter elements (AuxREs). The chain is Auxin response factor 14 (ARF14) from Oryza sativa subsp. japonica (Rice).